Here is an 812-residue protein sequence, read N- to C-terminus: Phenylalanine--tRNA ligase beta subunit (812 aa).

One can recognise a tRNA-binding domain in the interval 39 to 155 (SKTFAPFTIA…ADAPVGAGYA (117 aa)). Residues 405–480 (PEDRVIDFPL…RIVGVDKVPM (76 aa)) form the B5 domain. 4 residues coordinate Mg(2+): Asp458, Asp464, Glu467, and Glu468. Positions 718 to 811 (PAFQPVSRDF…VAKRTGGSLR (94 aa)) constitute an FDX-ACB domain.

This sequence belongs to the phenylalanyl-tRNA synthetase beta subunit family. Type 1 subfamily. Tetramer of two alpha and two beta subunits. It depends on Mg(2+) as a cofactor.

The protein localises to the cytoplasm. It catalyses the reaction tRNA(Phe) + L-phenylalanine + ATP = L-phenylalanyl-tRNA(Phe) + AMP + diphosphate + H(+). The protein is Phenylalanine--tRNA ligase beta subunit of Nitrobacter winogradskyi (strain ATCC 25391 / DSM 10237 / CIP 104748 / NCIMB 11846 / Nb-255).